Consider the following 216-residue polypeptide: Protein Syd (216 aa).

This sequence belongs to the Syd family.

The protein localises to the cell inner membrane. Interacts with the SecY protein in vivo. May bind preferentially to an uncomplexed state of SecY, thus functioning either as a chelating agent for excess SecY in the cell or as a regulatory factor that negatively controls the translocase function. The chain is Protein Syd from Shewanella frigidimarina (strain NCIMB 400).